The sequence spans 623 residues: Leucine aminopeptidase 2 (623 aa).

Residues 136-138 (QCE) and 261-266 (PYGGME) each bind a peptide. His-290 contributes to the Zn(2+) binding site. Catalysis depends on Glu-291, which acts as the Proton acceptor. His-294 and Glu-313 together coordinate Zn(2+). Tyr-391 functions as the Proton donor in the catalytic mechanism.

The protein belongs to the peptidase M1 family. Zn(2+) is required as a cofactor.

Its subcellular location is the cytoplasm. It is found in the nucleus. It carries out the reaction an epoxide + H2O = an ethanediol. Aminopeptidase that preferentially cleaves di- and tripeptides. Also has low epoxide hydrolase activity (in vitro). Can hydrolyze the epoxide leukotriene LTA(4) but it forms preferentially 5,6-dihydroxy-7,9,11,14-eicosatetraenoic acid rather than the cytokine leukotriene B(4) as the product compared to the homologous mammalian enzyme (in vitro). The sequence is that of Leucine aminopeptidase 2 (LKH1) from Candida albicans (strain SC5314 / ATCC MYA-2876) (Yeast).